Consider the following 229-residue polypeptide: PKHD-type hydroxylase RPD_3334 (229 aa).

A Fe2OG dioxygenase domain is found at 78–180 (QIFPPLFNRY…RVASFFWLQS (103 aa)). The Fe cation site is built by histidine 98, aspartate 100, and histidine 161. Arginine 171 provides a ligand contact to 2-oxoglutarate.

Fe(2+) is required as a cofactor. The cofactor is L-ascorbate.

The protein is PKHD-type hydroxylase RPD_3334 of Rhodopseudomonas palustris (strain BisB5).